A 297-amino-acid chain; its full sequence is 4-hydroxy-tetrahydrodipicolinate synthase (297 aa).

Pyruvate is bound at residue threonine 46. Tyrosine 134 acts as the Proton donor/acceptor in catalysis. The active-site Schiff-base intermediate with substrate is lysine 163. Residue isoleucine 205 participates in pyruvate binding.

It belongs to the DapA family. Homotetramer; dimer of dimers.

The protein resides in the cytoplasm. It carries out the reaction L-aspartate 4-semialdehyde + pyruvate = (2S,4S)-4-hydroxy-2,3,4,5-tetrahydrodipicolinate + H2O + H(+). The protein operates within amino-acid biosynthesis; L-lysine biosynthesis via DAP pathway; (S)-tetrahydrodipicolinate from L-aspartate: step 3/4. Functionally, catalyzes the condensation of (S)-aspartate-beta-semialdehyde [(S)-ASA] and pyruvate to 4-hydroxy-tetrahydrodipicolinate (HTPA). The polypeptide is 4-hydroxy-tetrahydrodipicolinate synthase (Thermoanaerobacter pseudethanolicus (strain ATCC 33223 / 39E) (Clostridium thermohydrosulfuricum)).